The chain runs to 122 residues: Allatotropin (122 aa).

Positions 1–23 are cleaved as a signal peptide; the sequence is MRVILAITLLFVAGSFIATASKG. Residues 24-40 constitute a propeptide that is removed on maturation; that stretch reads RNYPRFFKHRMKLREIR. The residue at position 53 (phenylalanine 53) is a Phenylalanine amide. A propeptide spanning residues 57–122 is cleaved from the precursor; it reads ESPAERIPDL…GDDSKKGTIA (66 aa).

As to expression, expressed in brain and ventral ganglia but not in the retrocerebral complex (at protein level).

It localises to the secreted. In terms of biological role, neuropeptide stimulator of juvenile hormone synthesis. The protein is Allatotropin of Camponotus floridanus (Florida carpenter ant).